A 351-amino-acid polypeptide reads, in one-letter code: Protein-glutamate methylesterase/protein-glutamine glutaminase 2 (351 aa).

The region spanning 4-121 is the Response regulatory domain; it reads KVLVVDDSTL…PQGFNEYQDL (118 aa). Asp55 is subject to 4-aspartylphosphate. The 193-residue stretch at 156 to 348 folds into the CheB-type methylesterase domain; sequence RTVNTQLVAI…DKLLQYLASV (193 aa). Catalysis depends on residues Ser168, His194, and Asp290.

It belongs to the CheB family. In terms of processing, phosphorylated by CheA. Phosphorylation of the N-terminal regulatory domain activates the methylesterase activity.

Its subcellular location is the cytoplasm. The catalysed reaction is [protein]-L-glutamate 5-O-methyl ester + H2O = L-glutamyl-[protein] + methanol + H(+). It carries out the reaction L-glutaminyl-[protein] + H2O = L-glutamyl-[protein] + NH4(+). In terms of biological role, involved in chemotaxis. Part of a chemotaxis signal transduction system that modulates chemotaxis in response to various stimuli. Catalyzes the demethylation of specific methylglutamate residues introduced into the chemoreceptors (methyl-accepting chemotaxis proteins or MCP) by CheR. Also mediates the irreversible deamidation of specific glutamine residues to glutamic acid. The chain is Protein-glutamate methylesterase/protein-glutamine glutaminase 2 from Shewanella oneidensis (strain ATCC 700550 / JCM 31522 / CIP 106686 / LMG 19005 / NCIMB 14063 / MR-1).